A 291-amino-acid polypeptide reads, in one-letter code: Flavonol synthase/flavanone 3-hydroxylase (291 aa).

One can recognise a Fe2OG dioxygenase domain in the interval 151 to 250 (CWYVMNINHY…RMSWPVLVSP (100 aa)). Fe cation is bound by residues His-175, Asp-177, and His-231.

The protein belongs to the iron/ascorbate-dependent oxidoreductase family. L-ascorbate is required as a cofactor. Fe cation serves as cofactor.

The protein resides in the cytoplasm. The catalysed reaction is a (2R,3R)-dihydroflavonol + 2-oxoglutarate + O2 = a flavonol + succinate + CO2 + H2O. It catalyses the reaction a (2S)-flavan-4-one + 2-oxoglutarate + O2 = a (2R,3R)-dihydroflavonol + succinate + CO2. Its pathway is secondary metabolite biosynthesis; flavonoid biosynthesis. Catalyzes the formation of flavonols from dihydroflavonols. It can act on dihydrokaempferol to produce kaempferol, on dihydroquercetin to produce quercitin and on dihydromyricetin to produce myricetin. The protein is Flavonol synthase/flavanone 3-hydroxylase of Matthiola incana (Common stock).